Reading from the N-terminus, the 625-residue chain is Vacuolar-sorting receptor 7 (625 aa).

The N-terminal stretch at 1–26 is a signal peptide; that stretch reads MGLVNGRASLTFLLAALTIIAMVVEA. The Lumenal segment spans residues 27–564; the sequence is RFVVEKESIS…CIERYGSKTA (538 aa). In terms of domain architecture, PA spans 58-166; the sequence is DYGGFLIGSV…SFGDDLRQGF (109 aa). Residues Asn-292, Asn-400, and Asn-432 are each glycosylated (N-linked (GlcNAc...) asparagine). EGF-like domains lie at 414-464 and 467-513; these read ETNE…TSCT and GPAR…LTCE. 7 disulfide bridges follow: Cys-418–Cys-436, Cys-425–Cys-445, Cys-447–Cys-463, Cys-471–Cys-491, Cys-478–Cys-499, Cys-501–Cys-512, and Cys-542–Cys-555. The EGF-like 3; calcium-binding domain occupies 514–556; the sequence is DINECKERSVCQCSGCRCKNSWGGYKCSCSGDRLYINDQDTCI. Residues 565-585 traverse the membrane as a helical segment; it reads WWLTFLILAIVAVAGLAGYIF. Residues 586 to 625 are Cytoplasmic-facing; sequence YKYRFRSYMDSEIMTIMSQYMPLESQRAREVPSEAEPFTL. The Tyrosine-based internalization motif signature appears at 605-608; the sequence is YMPL.

Belongs to the VSR (BP-80) family. As to expression, expressed at low levels in seedlings, roots, young leaves, flowers and siliques.

The protein resides in the golgi apparatus membrane. Vacuolar-sorting receptor (VSR) involved in clathrin-coated vesicles sorting from Golgi apparatus to vacuoles. This is Vacuolar-sorting receptor 7 (VSR7) from Arabidopsis thaliana (Mouse-ear cress).